Consider the following 84-residue polypeptide: Putative membrane protein insertion efficiency factor (84 aa).

This sequence belongs to the UPF0161 family.

The protein localises to the cell inner membrane. Could be involved in insertion of integral membrane proteins into the membrane. This is Putative membrane protein insertion efficiency factor from Shewanella sp. (strain ANA-3).